Reading from the N-terminus, the 35-residue chain is Thionin NsW1 (35 aa).

Cystine bridges form between cysteine 4/cysteine 32, cysteine 12/cysteine 30, and cysteine 16/cysteine 26.

Contains 4 disulfide bonds.

Its subcellular location is the secreted. Functionally, antimicrobial peptide disrupting membranes. Has antibacterial against Gram-positive bacteria S.aureus (MIC=6.5 uM) and B.subtilis (MIC=3.25 uM) but not against Gram-negative bacterium E.coli. Has antifungal activity against C.albicans (MIC=1.63 uM). The sequence is that of Thionin NsW1 from Nigella sativa (Black cumin).